The following is a 175-amino-acid chain: CASP-like protein 2C1 (175 aa).

Topologically, residues 1 to 7 (MVKLRET) are cytoplasmic. A helical transmembrane segment spans residues 8–28 (EVILRLCIVFFLLLTSCLIGL). Residues 29 to 45 (DSQTKEIAYIHKNVSFR) lie on the Extracellular side of the membrane. Asn41 carries an N-linked (GlcNAc...) asparagine glycan. The chain crosses the membrane as a helical span at residues 46-66 (YLLALEAELYIDVVVAAYNLV). Residues 67 to 91 (QLGLGWYNVEQKTSNPKWFSYLLDQ) are Cytoplasmic-facing. Residues 92–112 (TAAYVVFAGTSAAAQHSLLVV) form a helical membrane-spanning segment. The Extracellular segment spans residues 113-136 (TGSRELQWMKWCYKFTRFCFQMGS). A helical membrane pass occupies residues 137–157 (AIILNYIAAALMVLLSSISAF). Over 158–175 (NLFRLYSPKRFFRFKSSS) the chain is Cytoplasmic.

It belongs to the Casparian strip membrane proteins (CASP) family. In terms of assembly, homodimer and heterodimers.

Its subcellular location is the cell membrane. This is CASP-like protein 2C1 from Arabidopsis thaliana (Mouse-ear cress).